The following is a 218-amino-acid chain: 7-cyano-7-deazaguanine synthase (218 aa).

11 to 21 (LSGGMDSATLL) lines the ATP pocket. Zn(2+) is bound by residues C193, C201, C204, and C207.

This sequence belongs to the QueC family. Requires Zn(2+) as cofactor.

It catalyses the reaction 7-carboxy-7-deazaguanine + NH4(+) + ATP = 7-cyano-7-deazaguanine + ADP + phosphate + H2O + H(+). The protein operates within purine metabolism; 7-cyano-7-deazaguanine biosynthesis. Catalyzes the ATP-dependent conversion of 7-carboxy-7-deazaguanine (CDG) to 7-cyano-7-deazaguanine (preQ(0)). In Aquifex aeolicus (strain VF5), this protein is 7-cyano-7-deazaguanine synthase.